The chain runs to 147 residues: Transthyretin (147 aa).

The N-terminal stretch at 1–20 (MASLRLFLLCLAGLVFVSEA) is a signal peptide. Residue cysteine 30 is modified to Sulfocysteine. Lysine 35 is an L-thyroxine binding site. Residue glutamate 62 is modified to 4-carboxyglutamate. The residue at position 72 (serine 72) is a Phosphoserine. Glutamate 74 provides a ligand contact to L-thyroxine. N-linked (GlcNAc...) asparagine glycosylation is present at asparagine 118. Serine 137 serves as a coordination point for L-thyroxine.

The protein belongs to the transthyretin family. As to quaternary structure, homotetramer. Dimer of dimers. In the homotetramer, subunits assemble around a central channel that can accommodate two ligand molecules. Interacts with RBP4. In terms of processing, sulfonation of the reactive cysteine Cys-30 enhances the stability of the native conformation of TTR, avoiding misassembly of the protein leading to amyloid formation. As to expression, detected in plasma (at protein level). Detected in liver.

Its subcellular location is the secreted. In terms of biological role, thyroid hormone-binding protein. Probably transports thyroxine from the bloodstream to the brain. In Mus musculus (Mouse), this protein is Transthyretin (Ttr).